The chain runs to 735 residues: MKTKQQLRFLATILLTTILFVLAKTDTDPLEVLALQDLYKSLRNPEQLRGWRLEGGDPCGEAWLGISCSGSSIVDLQLRELKLLGSLGNQLQHLHNLKILDVSFNNLEGEIPFGLPPNATHINMAYNNLTQSIPFSLPLMTSLQSLNLSHNSLSGPLGNVFSGLQIKEMDLSFNNLTGDLPSSFGTLMNLTSLYLQNNRLTGSVIYLADLPLADLNIEDNQFSGIIPSHFQSIPHLWIWGNKFHVEPNYKPWKFPLDVRPLIQNDTGYPTTESSAIMNFPRPETQKVKKKKKGIGAGSTFLLVGGLALLGTFFALFAVRMNHRRAQNLAAIHRSNNSIAYSLPVSTGREYPVATEDNPQIKRFQPPPAPQLRHLPSPPVRIDKSARRKSFSATCQYPSFAKLFSAAELQLATNCFSEENLLGEGPLGSVYRAKLPDGQFAVVRNIPMSSLSLHEEEQFTEVLQTASKLRHPNIVTLLGFCIENGEHLLVYEYVGHLSLYNAMHDEVYKPLSWGLRLRIAIGVARALDYLHSSFCPPIAHSDLKATNILLDEELTPRIADCGLASLRPLTSNSVKLRASEIAIQNTGYIAPEHGQPGSSGTKSDTYALGVLLLELLTGRKAFDSSRPRGEQLLVKWASTRLHDRRSLEQMIDGGIAGTFSSRVASQYADIISLCTQAEKEFRPPVSEIVEALTALIQKQNKEASSSVADKTDPFSKSFCSTRTRFISSPTFSYLSS.

Positions 1 to 23 are cleaved as a signal peptide; the sequence is MKTKQQLRFLATILLTTILFVLA. Over 24 to 297 the chain is Extracellular; sequence KTDTDPLEVL…KKKKKGIGAG (274 aa). LRR repeat units follow at residues 78–94, 96–119, 120–140, 142–163, 165–187, 189–211, 212–232, and 233–253; these read LREL…LQHL, NLKI…PPNA, THIN…LPLM, SLQS…VFSG, QIKE…FGTL, NLTS…ADLP, LADL…HFQS, and IPHL…KPWK. N-linked (GlcNAc...) asparagine glycans are attached at residues asparagine 118, asparagine 128, asparagine 147, asparagine 175, and asparagine 189. Asparagine 264 carries N-linked (GlcNAc...) asparagine glycosylation. The chain crosses the membrane as a helical span at residues 298–318; it reads STFLLVGGLALLGTFFALFAV. The Cytoplasmic segment spans residues 319-735; sequence RMNHRRAQNL…SSPTFSYLSS (417 aa). Residues 358 to 378 are disordered; it reads PQIKRFQPPPAPQLRHLPSPP. Positions 415 to 695 constitute a Protein kinase domain; it reads FSEENLLGEG…EIVEALTALI (281 aa).

This sequence belongs to the protein kinase superfamily. Ser/Thr protein kinase family. As to expression, expressed in seedlings, roots, stems, leaves, flowers and siliques.

It localises to the membrane. The polypeptide is Protein STRUBBELIG-RECEPTOR FAMILY 2 (SRF2) (Arabidopsis thaliana (Mouse-ear cress)).